A 226-amino-acid polypeptide reads, in one-letter code: ATP-dependent dethiobiotin synthetase BioD (226 aa).

12 to 17 (GVGKTV) is an ATP binding site. Residue threonine 16 coordinates Mg(2+). The active site involves lysine 37. Threonine 41 is a substrate binding site. ATP contacts are provided by residues aspartate 49, 108-111 (EGAG), and 197-199 (PAG). Residues aspartate 49 and glutamate 108 each contribute to the Mg(2+) site.

It belongs to the dethiobiotin synthetase family. Homodimer. Requires Mg(2+) as cofactor.

It is found in the cytoplasm. The catalysed reaction is (7R,8S)-7,8-diammoniononanoate + CO2 + ATP = (4R,5S)-dethiobiotin + ADP + phosphate + 3 H(+). The protein operates within cofactor biosynthesis; biotin biosynthesis; biotin from 7,8-diaminononanoate: step 1/2. Its function is as follows. Catalyzes a mechanistically unusual reaction, the ATP-dependent insertion of CO2 between the N7 and N8 nitrogen atoms of 7,8-diaminopelargonic acid (DAPA, also called 7,8-diammoniononanoate) to form a ureido ring. The chain is ATP-dependent dethiobiotin synthetase BioD from Mycobacterium avium (strain 104).